We begin with the raw amino-acid sequence, 354 residues long: Methionine import ATP-binding protein MetN (354 aa).

The 243-residue stretch at 8 to 250 (LDHIDITFHQ…PREDLTKDFI (243 aa)) folds into the ABC transporter domain. 42–49 (GYSGAGKS) is an ATP binding site.

This sequence belongs to the ABC transporter superfamily. Methionine importer (TC 3.A.1.24) family. In terms of assembly, the complex is composed of two ATP-binding proteins (MetN), two transmembrane proteins (MetI) and a solute-binding protein (MetQ).

The protein resides in the cell membrane. It carries out the reaction L-methionine(out) + ATP + H2O = L-methionine(in) + ADP + phosphate + H(+). It catalyses the reaction D-methionine(out) + ATP + H2O = D-methionine(in) + ADP + phosphate + H(+). In terms of biological role, part of the ABC transporter complex MetNIQ involved in methionine import. Responsible for energy coupling to the transport system. In Streptococcus mutans serotype c (strain ATCC 700610 / UA159), this protein is Methionine import ATP-binding protein MetN.